We begin with the raw amino-acid sequence, 73 residues long: Large ribosomal subunit protein bL31 (73 aa).

This sequence belongs to the bacterial ribosomal protein bL31 family. Type A subfamily. Part of the 50S ribosomal subunit.

In terms of biological role, binds the 23S rRNA. The protein is Large ribosomal subunit protein bL31 of Rhodospirillum centenum (strain ATCC 51521 / SW).